Reading from the N-terminus, the 503-residue chain is Maturase K (503 aa).

This sequence belongs to the intron maturase 2 family. MatK subfamily.

The protein localises to the plastid. The protein resides in the chloroplast. Usually encoded in the trnK tRNA gene intron. Probably assists in splicing its own and other chloroplast group II introns. The protein is Maturase K of Backhousia myrtifolia (Grey myrtle).